Consider the following 276-residue polypeptide: UPF0276 protein CV_3513 (276 aa).

It belongs to the UPF0276 family.

The chain is UPF0276 protein CV_3513 from Chromobacterium violaceum (strain ATCC 12472 / DSM 30191 / JCM 1249 / CCUG 213 / NBRC 12614 / NCIMB 9131 / NCTC 9757 / MK).